The primary structure comprises 207 residues: Guanylate kinase (207 aa).

The Guanylate kinase-like domain occupies 4-184 (NMYYAISAPS…TLNKIKTIII (181 aa)). 11 to 18 (APSGTGKS) serves as a coordination point for ATP.

It belongs to the guanylate kinase family.

The protein resides in the cytoplasm. It carries out the reaction GMP + ATP = GDP + ADP. Its function is as follows. Essential for recycling GMP and indirectly, cGMP. This Wigglesworthia glossinidia brevipalpis protein is Guanylate kinase.